Consider the following 208-residue polypeptide: UPF0637 protein BCB4264_A4063 (208 aa).

It belongs to the UPF0637 family.

The sequence is that of UPF0637 protein BCB4264_A4063 from Bacillus cereus (strain B4264).